The primary structure comprises 209 residues: Imidazole glycerol phosphate synthase subunit HisH (209 aa).

Residues 1–205 (MIAIIDYGMG…KGVVKQWKSS (205 aa)) enclose the Glutamine amidotransferase type-1 domain. Cysteine 79 acts as the Nucleophile in catalysis. Residues histidine 180 and glutamate 182 contribute to the active site.

Heterodimer of HisH and HisF.

Its subcellular location is the cytoplasm. It carries out the reaction 5-[(5-phospho-1-deoxy-D-ribulos-1-ylimino)methylamino]-1-(5-phospho-beta-D-ribosyl)imidazole-4-carboxamide + L-glutamine = D-erythro-1-(imidazol-4-yl)glycerol 3-phosphate + 5-amino-1-(5-phospho-beta-D-ribosyl)imidazole-4-carboxamide + L-glutamate + H(+). The catalysed reaction is L-glutamine + H2O = L-glutamate + NH4(+). Its pathway is amino-acid biosynthesis; L-histidine biosynthesis; L-histidine from 5-phospho-alpha-D-ribose 1-diphosphate: step 5/9. Functionally, IGPS catalyzes the conversion of PRFAR and glutamine to IGP, AICAR and glutamate. The HisH subunit catalyzes the hydrolysis of glutamine to glutamate and ammonia as part of the synthesis of IGP and AICAR. The resulting ammonia molecule is channeled to the active site of HisF. The chain is Imidazole glycerol phosphate synthase subunit HisH from Bacillus cytotoxicus (strain DSM 22905 / CIP 110041 / 391-98 / NVH 391-98).